We begin with the raw amino-acid sequence, 142 residues long: uncharacterized protein (142 aa).

A disordered region spans residues 70 to 94 (PKSVSNSKKKKEKAEKGLLRPTTKP). The segment covering 81–94 (EKAEKGLLRPTTKP) has biased composition (basic and acidic residues).

This is an uncharacterized protein from Bacillus subtilis (strain 168).